Reading from the N-terminus, the 123-residue chain is MARRSGNPDEDLLKAVRIIKLLYQSSPCPNPRGSRQARKNRRRRWRARQRQIDSLSERILSDCLGRPAEPVPLQLPPIERLRLDCSESCGTSGTQQPQGTETGVGGPQISVESSAVLGSGTKN.

Serine 5 carries the post-translational modification Phosphoserine; by host CK2. A homomultimerization region spans residues 18–26 (IIKLLYQSS). Residues 25–50 (SSPCPNPRGSRQARKNRRRRWRARQR) are disordered. The short motif at 34–50 (SRQARKNRRRRWRARQR) is the Nuclear localization signal and RNA-binding (RRE) element. Basic residues predominate over residues 35–49 (RQARKNRRRRWRARQ). The Nuclear export signal and binding to XPO1 motif lies at 73–84 (LQLPPIERLRLD). Positions 86–123 (SESCGTSGTQQPQGTETGVGGPQISVESSAVLGSGTKN) are disordered. The span at 88-101 (SCGTSGTQQPQGTE) shows a compositional bias: polar residues. Serine 92 carries the post-translational modification Phosphoserine; by host.

It belongs to the HIV-1 REV protein family. As to quaternary structure, homomultimer; when bound to the RRE. Multimeric assembly is essential for activity and may involve XPO1. Binds to human KPNB1, XPO1, TNPO1, RANBP5 and IPO7. Interacts with the viral Integrase. Interacts with human KHDRBS1. Interacts with human NAP1; this interaction decreases Rev multimerization and stimulates its activity. Interacts with human DEAD-box helicases DDX3 and DDX24; these interactions may serve for viral RNA export to the cytoplasm and packaging, respectively. Interacts with human PSIP1; this interaction may inhibit HIV-1 DNA integration by promoting dissociation of the Integrase-LEDGF/p75 complex. Post-translationally, asymmetrically arginine dimethylated at one site by host PRMT6. Methylation impairs the RNA-binding activity and export of viral RNA from the nucleus to the cytoplasm. Phosphorylated by protein kinase CK2. Presence of, and maybe binding to the N-terminus of the regulatory beta subunit of CK2 is necessary for CK2-mediated Rev's phosphorylation.

Its subcellular location is the host nucleus. It is found in the host nucleolus. The protein localises to the host cytoplasm. Functionally, escorts unspliced or incompletely spliced viral pre-mRNAs (late transcripts) out of the nucleus of infected cells. These pre-mRNAs carry a recognition sequence called Rev responsive element (RRE) located in the env gene, that is not present in fully spliced viral mRNAs (early transcripts). This function is essential since most viral proteins are translated from unspliced or partially spliced pre-mRNAs which cannot exit the nucleus by the pathway used by fully processed cellular mRNAs. Rev itself is translated from a fully spliced mRNA that readily exits the nucleus. Rev's nuclear localization signal (NLS) binds directly to KPNB1/Importin beta-1 without previous binding to KPNA1/Importin alpha-1. KPNB1 binds to the GDP bound form of RAN (Ran-GDP) and targets Rev to the nucleus. In the nucleus, the conversion from Ran-GDP to Ran-GTP dissociates Rev from KPNB1 and allows Rev's binding to the RRE in viral pre-mRNAs. Rev multimerization on the RRE via cooperative assembly exposes its nuclear export signal (NES) to the surface. Rev can then form a complex with XPO1/CRM1 and Ran-GTP, leading to nuclear export of the complex. Conversion from Ran-GTP to Ran-GDP mediates dissociation of the Rev/RRE/XPO1/RAN complex, so that Rev can return to the nucleus for a subsequent round of export. Beside KPNB1, also seems to interact with TNPO1/Transportin-1, RANBP5/IPO5 and IPO7/RANBP7 for nuclear import. The nucleoporin-like HRB/RIP is an essential cofactor that probably indirectly interacts with Rev to release HIV RNAs from the perinuclear region to the cytoplasm. The polypeptide is Protein Rev (Human immunodeficiency virus type 1 group M subtype A (isolate U455) (HIV-1)).